Reading from the N-terminus, the 301-residue chain is Mitochondrial ornithine transporter 1 (301 aa).

6 helical membrane passes run 5 to 25 (PAIQ…ACVL), 68 to 88 (SPAL…YGFC), 110 to 130 (AAAG…TELV), 168 to 188 (GFYH…FFFF), 207 to 227 (LGPI…WLAV), and 237 to 257 (IQVL…LSIV). 3 Solcar repeats span residues 7–91 (IQAA…CQQV), 104–197 (LSDL…SRSF), and 207–293 (LGPI…SRKL).

This sequence belongs to the mitochondrial carrier (TC 2.A.29) family. Expressed in the liver (at protein level).

The protein resides in the mitochondrion inner membrane. It is found in the mitochondrion membrane. The enzyme catalyses L-citrulline(in) + L-ornithine(out) + H(+)(in) = L-citrulline(out) + L-ornithine(in) + H(+)(out). It catalyses the reaction L-ornithine(in) + L-arginine(out) = L-ornithine(out) + L-arginine(in). The catalysed reaction is L-ornithine(out) + L-lysine(in) = L-ornithine(in) + L-lysine(out). It carries out the reaction L-ornithine(out) + H(+)(in) = L-ornithine(in) + H(+)(out). The enzyme catalyses L-lysine(out) + H(+)(in) = L-lysine(in) + H(+)(out). Inhibited by pyridoxal 5'-phosphate as well as by mercurials (mersalyl, p-chloromercuribenzene sulfonate, and mercuric chloride), N-ethylmaleimide and spermine. Functionally, mitochondrial ornithine-citrulline antiporter. Catalyzes the exchange between cytosolic ornithine and mitochondrial citrulline plus an H(+), the proton compensates the positive charge of ornithine thus leading to an electroneutral transport. Plays a crucial role in the urea cycle, by connecting the cytosolic and the intramitochondrial reactions of the urea cycle. Lysine and arginine are also transported by the antiport mechanism. In addition, catalyzes an electroneutral exchange of ornithine or lysine for H(+), a reaction driven by the pH gradient across the inner membrane. The polypeptide is Mitochondrial ornithine transporter 1 (Slc25a15) (Rattus norvegicus (Rat)).